Consider the following 160-residue polypeptide: Large ribosomal subunit protein uL11 (160 aa).

This sequence belongs to the universal ribosomal protein uL11 family. As to quaternary structure, part of the ribosomal stalk of the 50S ribosomal subunit. Interacts with L10 and the large rRNA to form the base of the stalk. L10 forms an elongated spine to which L12 dimers bind in a sequential fashion forming a multimeric L10(L12)X complex.

In terms of biological role, forms part of the ribosomal stalk which helps the ribosome interact with GTP-bound translation factors. This chain is Large ribosomal subunit protein uL11, found in Nanoarchaeum equitans (strain Kin4-M).